The primary structure comprises 230 residues: Ribonuclease 3 (230 aa).

The RNase III domain maps to Met1–Gly134. Glu47 is a Mg(2+) binding site. Asp51 is an active-site residue. The Mg(2+) site is built by Asp120 and Glu123. Residue Glu123 is part of the active site. Positions Asp160–Glu229 constitute a DRBM domain.

The protein belongs to the ribonuclease III family. Homodimer. The cofactor is Mg(2+).

The protein localises to the cytoplasm. It catalyses the reaction Endonucleolytic cleavage to 5'-phosphomonoester.. In terms of biological role, digests double-stranded RNA. Involved in the processing of primary rRNA transcript to yield the immediate precursors to the large and small rRNAs (23S and 16S). Processes some mRNAs, and tRNAs when they are encoded in the rRNA operon. Processes pre-crRNA and tracrRNA of type II CRISPR loci if present in the organism. The sequence is that of Ribonuclease 3 from Streptococcus pyogenes serotype M2 (strain MGAS10270).